We begin with the raw amino-acid sequence, 495 residues long: MAEEKALNDQMLARRQKLATIVSDLHLDPFGKRFERTAKAQELHNLYDASSLEELENAKHEVVIAGRMVAKRGAGKVIFADFRDVSGKIQVYARRDDLADNYPIIKRADLGDFLGIKGIMMKTEAGELTVLATELTHLSKALRPMPDKFHGISDVETRYRKRYLDLIANEDSFKKFQERSHIISAIRAYMDRNDFLEVETPILQTEAGGAAARPFITHHNALNIDMYMRIATELYLKRLVVGGMERVYEIGRIFRNEGMDPKHNPEFTTMESYAAYMDFTDVMDETEGIFKAAASVVSDDLKITYQGTEIDLGTKFARKHLVDLIKEQTGIDFWQEMSVEEAQKLADDNHVKYEKYWGVGHIINAFFEEFVEDTLVQPTFVYGHPVEVSPLAKKNTDDPRFTDRFELFIMGSEYANAFTELNDPIDQRARFEAQAAERENGNDEAEGIDEDFIEALEYGMPPTGGLGVGIDRLVMLLTDSDTIRDVVLFPTMRPE.

The Mg(2+) site is built by E406 and E413.

It belongs to the class-II aminoacyl-tRNA synthetase family. Homodimer. Mg(2+) serves as cofactor.

The protein localises to the cytoplasm. It carries out the reaction tRNA(Lys) + L-lysine + ATP = L-lysyl-tRNA(Lys) + AMP + diphosphate. The protein is Lysine--tRNA ligase of Leuconostoc mesenteroides subsp. mesenteroides (strain ATCC 8293 / DSM 20343 / BCRC 11652 / CCM 1803 / JCM 6124 / NCDO 523 / NBRC 100496 / NCIMB 8023 / NCTC 12954 / NRRL B-1118 / 37Y).